Here is a 153-residue protein sequence, read N- to C-terminus: Deoxyuridine 5'-triphosphate nucleotidohydrolase (153 aa).

Substrate-binding positions include 71 to 73, Asn-84, 88 to 90, and Met-98; these read RSG and LID.

Belongs to the dUTPase family. It depends on Mg(2+) as a cofactor.

It catalyses the reaction dUTP + H2O = dUMP + diphosphate + H(+). It participates in pyrimidine metabolism; dUMP biosynthesis; dUMP from dCTP (dUTP route): step 2/2. Its function is as follows. This enzyme is involved in nucleotide metabolism: it produces dUMP, the immediate precursor of thymidine nucleotides and it decreases the intracellular concentration of dUTP so that uracil cannot be incorporated into DNA. This chain is Deoxyuridine 5'-triphosphate nucleotidohydrolase, found in Wigglesworthia glossinidia brevipalpis.